A 695-amino-acid chain; its full sequence is Elongation factor G (695 aa).

A tr-type G domain is found at 12–286 (DKLRNIGIMA…AVIDYLPSPL (275 aa)). Residues 21–28 (AHIDAGKT), 85–89 (DTPGH), and 139–142 (NKMD) contribute to the GTP site.

The protein belongs to the TRAFAC class translation factor GTPase superfamily. Classic translation factor GTPase family. EF-G/EF-2 subfamily.

It is found in the cytoplasm. Functionally, catalyzes the GTP-dependent ribosomal translocation step during translation elongation. During this step, the ribosome changes from the pre-translocational (PRE) to the post-translocational (POST) state as the newly formed A-site-bound peptidyl-tRNA and P-site-bound deacylated tRNA move to the P and E sites, respectively. Catalyzes the coordinated movement of the two tRNA molecules, the mRNA and conformational changes in the ribosome. This is Elongation factor G from Thermotoga petrophila (strain ATCC BAA-488 / DSM 13995 / JCM 10881 / RKU-1).